Consider the following 245-residue polypeptide: CTD nuclear envelope phosphatase 1B (245 aa).

The chain crosses the membrane as a helical span at residues 7–29 (CLLGVRTFHGVTSRIWSFFLYIL). In terms of domain architecture, FCP1 homology spans 58–225 (NNVKRKILVL…LNLLPMLDAL (168 aa)).

This sequence belongs to the dullard family.

It localises to the endoplasmic reticulum membrane. It is found in the nucleus membrane. The catalysed reaction is O-phospho-L-seryl-[protein] + H2O = L-seryl-[protein] + phosphate. The enzyme catalyses O-phospho-L-threonyl-[protein] + H2O = L-threonyl-[protein] + phosphate. Serine/threonine protein phosphatase that may dephosphorylate and activate lipins. Lipins are phosphatidate phosphatases that catalyze the conversion of phosphatidic acid to diacylglycerol and control the metabolism of fatty acids at different levels. May indirectly modulate the lipid composition of nuclear and/or endoplasmic reticulum membranes and be required for proper nuclear membrane morphology and/or dynamics. May also indirectly regulate the production of lipid droplets and triacylglycerol. May antagonize BMP signaling. In Danio rerio (Zebrafish), this protein is CTD nuclear envelope phosphatase 1B (ctdnep1b).